The chain runs to 442 residues: MVDVNENPFDGTDSIFERKQPLKKDTFTPDTIFHRDEEIEFYINALQDVIVGHDPNNVFVYGPTGVGKTAVTKWVRDKLEEKAEAEDIPLTVVGPINCRNYRSAYALVNTLVNEFRDPENQLPESGYSTDSVFEFLYEEIEAVGGNVLIILDEIDNIPADARNDFLYELPRAEANENTPITDAKVGLIGISNDLKFVDVLEPKVKSTLGEREIKFGPYDATELRDILGYYADIAFREDVLGEDVVPLAAAFSAQERGDVRQGLRILEKAGEYARMEGAEGVTEAHTRRATDTIETDELLDYFEHDLSSQQALTYLATTLALIEPKHEASTKRIYNLYSSIAESSGRRVKSERKIYEFLDQLSMQGLVRSAERNLGRKGGRKYIYEVTDDPTDIINAALQSSYSDAVPSNVNGILEHYLEDEATEFEAPDTTDDEQQNLWQFT.

ATP contacts are provided by residues 66 to 70 (VGKTA) and Y218.

It belongs to the CDC6/cdc18 family.

In terms of biological role, involved in regulation of DNA replication. The chain is ORC1-type DNA replication protein 8 (cdc6h) from Haloarcula marismortui (strain ATCC 43049 / DSM 3752 / JCM 8966 / VKM B-1809) (Halobacterium marismortui).